The sequence spans 161 residues: Endoribonuclease YbeY (161 aa).

Zn(2+) contacts are provided by His120, His124, and Asp130.

This sequence belongs to the endoribonuclease YbeY family. The cofactor is Zn(2+).

It localises to the cytoplasm. Functionally, single strand-specific metallo-endoribonuclease involved in late-stage 70S ribosome quality control and in maturation of the 3' terminus of the 16S rRNA. The chain is Endoribonuclease YbeY from Chlamydia muridarum (strain MoPn / Nigg).